The following is a 275-amino-acid chain: Glutamate racemase (275 aa).

Substrate is bound by residues 10 to 11 and 42 to 43; these read DS and YG. Catalysis depends on Cys-74, which acts as the Proton donor/acceptor. 75-76 lines the substrate pocket; the sequence is NT. The active-site Proton donor/acceptor is the Cys-189. 190–191 is a substrate binding site; the sequence is TH.

The protein belongs to the aspartate/glutamate racemases family.

The catalysed reaction is L-glutamate = D-glutamate. It participates in cell wall biogenesis; peptidoglycan biosynthesis. In terms of biological role, provides the (R)-glutamate required for cell wall biosynthesis. The polypeptide is Glutamate racemase (Bartonella tribocorum (strain CIP 105476 / IBS 506)).